The primary structure comprises 620 residues: Arginine--tRNA ligase (620 aa).

Residues A147–G157 carry the 'HIGH' region motif.

The protein belongs to the class-I aminoacyl-tRNA synthetase family. As to quaternary structure, monomer.

Its subcellular location is the cytoplasm. It carries out the reaction tRNA(Arg) + L-arginine + ATP = L-arginyl-tRNA(Arg) + AMP + diphosphate. The sequence is that of Arginine--tRNA ligase from Bifidobacterium longum (strain NCC 2705).